A 236-amino-acid chain; its full sequence is Chorionic somatomammotropin hormone (236 aa).

The signal sequence occupies residues Met1–Gly36. Intrachain disulfides connect Cys44–Cys51, Cys97–Cys212, and Cys229–Cys234.

Belongs to the somatotropin/prolactin family.

It is found in the secreted. The sequence is that of Chorionic somatomammotropin hormone (CSH) from Ovis aries (Sheep).